The chain runs to 381 residues: Protein COS8 (381 aa).

The Extracellular portion of the chain corresponds to 1–42 (MKENEVKDEKSVDVLSFKQLEFQKTVLPQDVFRNELTWFCYE). Residues 43 to 63 (IYKSLAFRIWMLLWLPLSVWW) traverse the membrane as a helical segment. Residues 64-72 (KLSSNWIHP) lie on the Cytoplasmic side of the membrane. Residues 73–93 (LIVSLLVLFLGPFFVLVICGL) traverse the membrane as a helical segment. Residues 94 to 237 (SRKRSLSKQL…WILKRIFNLR (144 aa)) are Extracellular-facing. A helical membrane pass occupies residues 238 to 258 (CLPLFLYYFLIVYTSGNADLI). The Cytoplasmic portion of the chain corresponds to 259–381 (SRFLFPVVMF…QSARNEKPLK (123 aa)).

It belongs to the DUP/COS family.

The protein localises to the membrane. This is Protein COS8 (COS8) from Saccharomyces cerevisiae (strain ATCC 204508 / S288c) (Baker's yeast).